The chain runs to 172 residues: 3-hydroxydecanoyl-[acyl-carrier-protein] dehydratase (172 aa).

H71 is a catalytic residue.

This sequence belongs to the thioester dehydratase family. FabA subfamily. In terms of assembly, homodimer.

It localises to the cytoplasm. It catalyses the reaction a (3R)-hydroxyacyl-[ACP] = a (2E)-enoyl-[ACP] + H2O. The enzyme catalyses (3R)-hydroxydecanoyl-[ACP] = (2E)-decenoyl-[ACP] + H2O. The catalysed reaction is (2E)-decenoyl-[ACP] = (3Z)-decenoyl-[ACP]. The protein operates within lipid metabolism; fatty acid biosynthesis. Its function is as follows. Necessary for the introduction of cis unsaturation into fatty acids. Catalyzes the dehydration of (3R)-3-hydroxydecanoyl-ACP to E-(2)-decenoyl-ACP and then its isomerization to Z-(3)-decenoyl-ACP. Can catalyze the dehydratase reaction for beta-hydroxyacyl-ACPs with saturated chain lengths up to 16:0, being most active on intermediate chain length. The sequence is that of 3-hydroxydecanoyl-[acyl-carrier-protein] dehydratase from Cronobacter sakazakii (strain ATCC BAA-894) (Enterobacter sakazakii).